A 1286-amino-acid chain; its full sequence is ABC transporter B family member 1 (1286 aa).

Helical transmembrane passes span 42 to 62 and 93 to 113; these read VLMG…PLFL and FLVV…CWMW. The 290-residue stretch at 44–333 folds into the ABC transmembrane type-1 1 domain; the sequence is MGIGSVGAFV…SAPSMAAFAK (290 aa). Aspartate 139 is an ATP binding site. 2 consecutive transmembrane segments (helical) span residues 166–186 and 187–207; these read LGNF…GFTA and VWQL…IGGI. Asparagine 217 carries N-linked (GlcNAc...) asparagine glycosylation. 2 consecutive transmembrane segments (helical) span residues 277 to 297 and 301 to 321; these read ATYF…GYLV and LTNG…GLAL. Tyrosine 286 contributes to the brassinolide binding site. The ABC transporter 1 domain maps to 368–604; sequence VELKNVDFSY…GENGVYAKLI (237 aa). The ATP site is built by tyrosine 377, serine 379, arginine 380, glycine 408, lysine 409, serine 410, and threonine 411. A disordered region spans residues 614-647; it reads AMSNARKSSARPSSARNSVSSPIMTRNSSYGRSP. Residues 616–635 are compositionally biased toward low complexity; sequence SNARKSSARPSSARNSVSSP. Asparagine 640 carries an N-linked (GlcNAc...) asparagine glycan. The ABC transmembrane type-1 2 domain maps to 700 to 988; sequence ALLGSVGSVI…TLTLAPDFIK (289 aa). The next 2 helical transmembrane spans lie at 705–725 and 745–765; these read VGSV…SAVL and YLLI…HSFW. The N-linked (GlcNAc...) asparagine glycan is linked to asparagine 771. Aspartate 793 contributes to the ATP binding site. Asparagine 797 is a glycosylation site (N-linked (GlcNAc...) asparagine). The next 4 helical transmembrane spans lie at 821 to 843, 845 to 867, 932 to 952, and 967 to 987; these read ISVI…VLQW, LALV…KMFM, VAQF…SWLV, and MVLM…PDFI. Residues tyrosine 941 and glutamate 978 each coordinate brassinolide. The region spanning 1024 to 1260 is the ABC transporter 2 domain; it reads VELKHIDFSY…HPDGIYARMI (237 aa). 5 residues coordinate ATP: tyrosine 1033, arginine 1036, glycine 1064, lysine 1065, and serine 1066. Residues 1049–1286 are interaction with FKBP42/TWD1; that stretch reads ARAGKTLALV…SSSRVKEDDA (238 aa).

This sequence belongs to the ABC transporter superfamily. ABCB family. Multidrug resistance exporter (TC 3.A.1.201) subfamily. Interacts with 1-naphthylphthalamic acid (NPA) and FKBP42/TWD1. In terms of tissue distribution, ubiquitous, with high levels in peduncles. Mostly localized in young developing tissues, including meristems, as well as root and shoot apices.

It localises to the cell membrane. The enzyme catalyses (indol-3-yl)acetate(in) + ATP + H2O = (indol-3-yl)acetate(out) + ADP + phosphate + H(+). It carries out the reaction brassinolide(in) + ATP + H2O = brassinolide(out) + ADP + phosphate + H(+). It catalyses the reaction 24-epi-brassinolide(in) + ATP + H2O = 24-epi-brassinolide(out) + ADP + phosphate + H(+). The catalysed reaction is 24-epi-castasterone(in) + ATP + H2O = 24-epi-castasterone(out) + ADP + phosphate + H(+). The enzyme catalyses castasterone(in) + ATP + H2O = castasterone(out) + ADP + phosphate + H(+). Transport capacity is stimulated by the chaperone protein FKBP42/TWD1. Transport activity inhibited by 1-N-naphthylphthalamic acid (NPA), cyclopropyl propane dione (CPD), cyclosporin A, verapamil and quercetin. ATPase activity is specifically activated by bioactive brassinosteroids in a dose-dependent manner, including brassinolide (BL), 24-epiBL, 24-epicastasterone (24-epiCS) and castasterone-alkyne; BL binding leads to structural changes. Inhibited by vanadate. Functionally, brassinosteroid exporter that, in conjunction with ABCB19, supports the accumulation of exogenous brassinosteroids (BR) in the apoplast, thus promoting BR signaling initiation involving the specific receptor BRI1 and required for plant growth and stress responses. Auxin efflux transporter that acts as a negative regulator of light signaling to promote hypocotyl elongation. May contribute to the regulation of leaf position and morphology during PHOT1-mediated blue light responses involving auxin distribution, especially in low light fluence. Together with ABCB19 and in a FKBP42/TWD1-dependent manner, supports seed development by promoting stamen elongation and, to a lesser extent, anther dehiscence and pollen maturation, probably as auxin transporters. Mediates the accumulation of chlorophyll and anthocyanin, as well as the expression of genes in response to light. Participates directly in auxin efflux and thus regulates the polar (presumably basipetal) auxin transport (from root tips to root elongating zone). Also transports some auxin metabolites such as oxindoleacetic acid and indoleacetaldehyde. Involved in diverse auxin-mediated responses including gravitropism, phototropism and lateral root formation. Confers resistance to herbicides such as dicamba, pendimethalin, oryzalin, and monosodium acid methanearsonate (MSMA), but not to herbicides such as glyphosate, atrazine, bentazon and fluazifop-p-butyl. Also mediates resistance to xenobiotics such as cycloheximide and the cytokinin N6-(2-isopentenyl)adenine (2IP). In Arabidopsis thaliana (Mouse-ear cress), this protein is ABC transporter B family member 1.